A 68-amino-acid polypeptide reads, in one-letter code: Large ribosomal subunit protein uL29 (68 aa).

Belongs to the universal ribosomal protein uL29 family.

This is Large ribosomal subunit protein uL29 from Rhodospirillum rubrum (strain ATCC 11170 / ATH 1.1.1 / DSM 467 / LMG 4362 / NCIMB 8255 / S1).